Here is a 250-residue protein sequence, read N- to C-terminus: tRNA (guanine-N(1)-)-methyltransferase (250 aa).

S-adenosyl-L-methionine contacts are provided by residues glycine 108 and 127-132 (LGDFVL).

This sequence belongs to the RNA methyltransferase TrmD family. In terms of assembly, homodimer.

The protein resides in the cytoplasm. The enzyme catalyses guanosine(37) in tRNA + S-adenosyl-L-methionine = N(1)-methylguanosine(37) in tRNA + S-adenosyl-L-homocysteine + H(+). Functionally, specifically methylates guanosine-37 in various tRNAs. In Streptococcus agalactiae serotype Ia (strain ATCC 27591 / A909 / CDC SS700), this protein is tRNA (guanine-N(1)-)-methyltransferase.